Here is a 329-residue protein sequence, read N- to C-terminus: Glyceraldehyde-3-phosphate dehydrogenase 1 (329 aa).

Residues 11 to 12 (RI), aspartate 33, and glutamate 77 each bind NAD(+). A Phosphoserine modification is found at serine 148. 148 to 150 (SCT) provides a ligand contact to D-glyceraldehyde 3-phosphate. The Nucleophile role is filled by cysteine 149. Serine 177 carries the post-translational modification Phosphoserine. Threonine 179 provides a ligand contact to D-glyceraldehyde 3-phosphate. Serine 200 bears the Phosphoserine mark. D-glyceraldehyde 3-phosphate contacts are provided by residues 208–209 (TG) and arginine 231. Residue asparagine 313 coordinates NAD(+).

Belongs to the glyceraldehyde-3-phosphate dehydrogenase family. Homotetramer.

It localises to the cytoplasm. The catalysed reaction is D-glyceraldehyde 3-phosphate + phosphate + NAD(+) = (2R)-3-phospho-glyceroyl phosphate + NADH + H(+). It functions in the pathway carbohydrate degradation; glycolysis; pyruvate from D-glyceraldehyde 3-phosphate: step 1/5. The protein is Glyceraldehyde-3-phosphate dehydrogenase 1 of Kluyveromyces marxianus (Yeast).